The following is a 491-amino-acid chain: Probable glycogen synthase 2 (491 aa).

Lys15 serves as a coordination point for ADP-alpha-D-glucose.

This sequence belongs to the glycosyltransferase 1 family. Bacterial/plant glycogen synthase subfamily.

The enzyme catalyses [(1-&gt;4)-alpha-D-glucosyl](n) + ADP-alpha-D-glucose = [(1-&gt;4)-alpha-D-glucosyl](n+1) + ADP + H(+). The protein operates within glycan biosynthesis; glycogen biosynthesis. Functionally, synthesizes alpha-1,4-glucan chains using ADP-glucose. The chain is Probable glycogen synthase 2 (glgA2) from Synechocystis sp. (strain ATCC 27184 / PCC 6803 / Kazusa).